The chain runs to 322 residues: NADH-cytochrome b5 reductase 2 (322 aa).

Residues 32–48 (LAPIYISVGLAGLGVGL) form a helical membrane-spanning segment. In terms of domain architecture, FAD-binding FR-type spans 72-176 (QGWVDLKLSE…KGPIPKYPWE (105 aa)). 179–214 (KHKHICLIAGGTGITPMYQLARQIFKNPEDQTKVTL) is an FAD binding site.

The protein belongs to the flavoprotein pyridine nucleotide cytochrome reductase family. FAD is required as a cofactor.

It is found in the mitochondrion outer membrane. The enzyme catalyses 2 Fe(III)-[cytochrome b5] + NADH = 2 Fe(II)-[cytochrome b5] + NAD(+) + H(+). May mediate the reduction of outer membrane cytochrome b5. This Aspergillus clavatus (strain ATCC 1007 / CBS 513.65 / DSM 816 / NCTC 3887 / NRRL 1 / QM 1276 / 107) protein is NADH-cytochrome b5 reductase 2 (mcr1).